A 344-amino-acid chain; its full sequence is MATPYVPVPMPIGNSASSFTNNRNQRSSSFGSVSTSSTSSKGQLEDSAVGSLKQTNVQDQMDSASSMCGSPLIRTKFTGTDSSIEYSARPREAEEQHPEAVNWEDRPSTPTILGYEVMEERAKFTVYKILVKKSPEESWVVFRRYTDFSRLNDKLKEMFPGFRLALPPKRWFKDNYNAEFLEDRQLGLQAFLQNLVAHKDIANCLAVREFLCLDDPPGPFDSLEESRAFCETLEETNYHLQRELLEKQKEVESLKKLLGEKQLHIDALETRIRTLSLEPGASLYVSRAEGGQILRVEPSVLQVNRDVLDEESRADHKPHFNSREAGSVIAGIEVAQLAYNAEDD.

Residues 1–10 are compositionally biased toward pro residues; the sequence is MATPYVPVPM. The tract at residues 1 to 72 is disordered; sequence MATPYVPVPM…SASSMCGSPL (72 aa). A compositionally biased stretch (polar residues) spans 14-26; that stretch reads NSASSFTNNRNQR. The span at 27-40 shows a compositional bias: low complexity; sequence SSSFGSVSTSSTSS. Positions 52–68 are enriched in polar residues; sequence LKQTNVQDQMDSASSMC. Residues 105-218 enclose the PX domain; that stretch reads DRPSTPTILG…EFLCLDDPPG (114 aa). A 1,2-diacyl-sn-glycero-3-phospho-(1D-myo-inositol-3-phosphate) is bound by residues arginine 144, threonine 146, and arginine 184. Serine 222 carries the phosphoserine modification. A coiled-coil region spans residues 223 to 278; it reads LEESRAFCETLEETNYHLQRELLEKQKEVESLKKLLGEKQLHIDALETRIRTLSLE.

This sequence belongs to the sorting nexin family. Homooligomer. Interacts with EGFR.

The protein localises to the early endosome membrane. It localises to the late endosome membrane. Its subcellular location is the cytoplasm. The protein resides in the lysosome. In terms of biological role, may be involved in several stages of intracellular trafficking. Plays a role in protein transport from early to late endosomes. Plays a role in protein transport to the lysosome. Promotes degradation of EGFR after EGF signaling. The protein is Sorting nexin-16 (Snx16) of Mus musculus (Mouse).